The chain runs to 311 residues: Malate dehydrogenase (311 aa).

Residues 7–13 (GAAGGIG) and Asp34 contribute to the NAD(+) site. Substrate is bound by residues Arg81 and Arg87. Residues Asn94 and 117-119 (ITN) each bind NAD(+). Substrate-binding residues include Asn119 and Arg153. His177 functions as the Proton acceptor in the catalytic mechanism. An NAD(+)-binding site is contributed by Met227.

The protein belongs to the LDH/MDH superfamily. MDH type 1 family. Homodimer.

The enzyme catalyses (S)-malate + NAD(+) = oxaloacetate + NADH + H(+). Catalyzes the reversible oxidation of malate to oxaloacetate. The sequence is that of Malate dehydrogenase from Pseudoalteromonas atlantica (strain T6c / ATCC BAA-1087).